The primary structure comprises 621 residues: Probable serine/threonine-protein kinase WNK2 (621 aa).

The region spanning 28–286 (GRYTEVLGKG…AQELLMDPFL (259 aa)) is the Protein kinase domain. Residues 108 to 111 (TEVF) and K158 each bind ATP. D175 acts as the Proton acceptor in catalysis. 4 disordered regions span residues 438-490 (SVEN…SDSP), 501-520 (VEPH…NDTD), 527-553 (GTSV…SPQS), and 600-621 (HREE…SDKP).

This sequence belongs to the protein kinase superfamily. Ser/Thr protein kinase family. WNK subfamily.

The catalysed reaction is L-seryl-[protein] + ATP = O-phospho-L-seryl-[protein] + ADP + H(+). It catalyses the reaction L-threonyl-[protein] + ATP = O-phospho-L-threonyl-[protein] + ADP + H(+). This chain is Probable serine/threonine-protein kinase WNK2 (WNK2), found in Oryza sativa subsp. japonica (Rice).